The sequence spans 409 residues: Threonine dehydratase-like protein AKTS1-1 (409 aa).

The interval 1-21 is disordered; that stretch reads MADYLRQVMPENDSDSEALPR. Lys111 is modified (N6-(pyridoxal phosphate)lysine). Residues Asn138, 239–243, and Ser368 each bind pyridoxal 5'-phosphate; that span reads GEGSL.

This sequence belongs to the serine/threonine dehydratase family. Requires pyridoxal 5'-phosphate as cofactor.

The protein operates within mycotoxin biosynthesis. Its function is as follows. Threonine dehydratase-like protein; part of the gene clusters that mediate the biosynthesis of the host-selective toxins (HSTs) AK-toxins responsible for Japanese pear black spot disease by the Japanese pear pathotype. AK-toxins are esters of 9,10-epoxy 8-hydroxy 9-methyldecatrienoic acid (EDA). On cellular level, AK-toxins affect plasma membrane of susceptible cells and cause a sudden increase in loss of K(+) after a few minutes of toxin treatment. The acyl-CoA ligase AKT1, the hydrolase AKT2 and enoyl-CoA hydratase AKT3 are all involved in the biosynthesis of the AK-, AF- and ACT-toxin common 9,10-epoxy-8-hydroxy-9-methyl-decatrienoic acid (EDA) structural moiety. Part of the EDA biosynthesis occurs in the peroxisome since these 3 enzymes are localized in peroxisomes. The exact roles of the 3 enzymes, as well as of additional AK-toxin clusters enzymes, including AKT4, AKT6 and AKTS1, have still to be elucidated. The Cytochrome P450 monooxygenase AKT7 on the other side functions to limit production of EDA and AK-toxin, probably via the catalysis of a side reaction of EDA or its precursor. This chain is Threonine dehydratase-like protein AKTS1-1, found in Alternaria alternata (Alternaria rot fungus).